The chain runs to 551 residues: Serine/threonine-protein kinase ppk21 (551 aa).

The segment at 24-43 (EARGERNPVKPQSSNVVPGT) is disordered. The 261-residue stretch at 55–315 (YVFGDIIGDG…TQQIKQFPFF (261 aa)) folds into the Protein kinase domain. ATP contacts are provided by residues 65 to 67 (SFS) and K84. The interval 86–131 (LDKKYIVKENKVKYVNIERDSMMRLNGFPGISRLFHTFQDDLKLYY) is PIF-pocket. ATP-binding positions include 134–136 (ELA) and E140. Residue D179 is the Proton acceptor of the active site. Residues E183 and D197 each coordinate ATP. At S220 the chain carries Phosphoserine; by autocatalysis. Position 538 is a phosphoserine (S538).

The protein belongs to the protein kinase superfamily. AGC Ser/Thr protein kinase family. PDPK1 subfamily.

Its subcellular location is the cytoplasm. It is found in the nucleus. The protein localises to the cytoskeleton. The protein resides in the microtubule organizing center. It localises to the spindle pole body. It carries out the reaction L-seryl-[protein] + ATP = O-phospho-L-seryl-[protein] + ADP + H(+). The catalysed reaction is L-threonyl-[protein] + ATP = O-phospho-L-threonyl-[protein] + ADP + H(+). The sequence is that of Serine/threonine-protein kinase ppk21 (ppk21) from Schizosaccharomyces pombe (strain 972 / ATCC 24843) (Fission yeast).